The sequence spans 167 residues: Ureidoglycolate lyase (167 aa).

The protein belongs to the ureidoglycolate lyase family. Homodimer. Ni(2+) is required as a cofactor.

The catalysed reaction is (S)-ureidoglycolate = urea + glyoxylate. It functions in the pathway nitrogen metabolism; (S)-allantoin degradation. In terms of biological role, catalyzes the catabolism of the allantoin degradation intermediate (S)-ureidoglycolate, generating urea and glyoxylate. Involved in the utilization of allantoin as nitrogen source. The polypeptide is Ureidoglycolate lyase (Pseudomonas putida (strain ATCC 700007 / DSM 6899 / JCM 31910 / BCRC 17059 / LMG 24140 / F1)).